The chain runs to 1012 residues: Structural polyprotein (1012 aa).

Asp30 contacts a divalent metal cation. The Peptidase S50 domain maps to Ala513–Ala755. Ser652 serves as the catalytic Nucleophile. Lys692 is an active-site residue. The disordered stretch occupies residues Met970–Glu1012. The span at Arg975–Pro986 shows a compositional bias: basic residues. Positions Ile1003–Glu1012 are interaction with VP1 protein.

Homotrimer. A central divalent metal stabilizes the VP2 trimer. Interacts with host ITGA4/ITGB1. In terms of assembly, homodimer. Interacts (via C-terminus) with VP1 in the cytoplasm. Interacts with VP2. Specific enzymatic cleavages yield mature proteins. The capsid assembly seems to be regulated by polyprotein processing. The protease VP4 cleaves itself off the polyprotein, thus releasing pre-VP2 and VP3 within the infected cell. During capsid assembly, the C-terminus of pre-VP2 is further processed by VP4, giving rise to VP2, the external capsid protein and three small peptides that all stay closely associated with the capsid.

The protein resides in the virion. It localises to the host cytoplasm. Capsid protein VP2 self assembles to form an icosahedral capsid with a T=13 symmetry, about 70 nm in diameter, and consisting of 260 VP2 trimers. The capsid encapsulates the genomic dsRNA. VP2 is also involved in attachment and entry into the host cell by interacting with host ITGA4/ITGB1. In terms of biological role, the precursor of VP2 plays an important role in capsid assembly. First, pre-VP2 and VP2 oligomers assemble to form a procapsid. Then, the pre-VP2 intermediates may be processed into VP2 proteins by proteolytic cleavage mediated by VP4 to obtain the mature virion. The final capsid is composed of pentamers and hexamers but VP2 has a natural tendency to assemble into all-pentameric structures. Therefore pre-VP2 may be required to allow formation of the hexameric structures. Functionally, protease VP4 is a serine protease that cleaves the polyprotein into its final products. Pre-VP2 is first partially cleaved, and may be completely processed by VP4 upon capsid maturation. Its function is as follows. Capsid protein VP3 plays a key role in virion assembly by providing a scaffold for the capsid made of VP2. May self-assemble to form a T=4-like icosahedral inner-capsid composed of at least 180 trimers. Plays a role in genomic RNA packaging by recruiting VP1 into the capsid and interacting with the dsRNA genome segments to form a ribonucleoprotein complex. Additionally, the interaction of the VP3 C-terminal tail with VP1 removes the inherent structural blockade of the polymerase active site. Thus, VP3 can also function as a transcriptional activator. Structural peptide 1 is a small peptide derived from pre-VP2 C-terminus. It destabilizes and perforates cell membranes, suggesting a role during entry. In terms of biological role, structural peptide 2 is a small peptide derived from pVP2 C-terminus. It is not essential for the virus viability, but viral growth is affected when missing. Functionally, structural peptide 3 is a small peptide derived from pVP2 C-terminus. It is not essential for the virus viability, but viral growth is affected when missing. Its function is as follows. Structural peptide 4 is a small peptide derived from pVP2 C-terminus. It is essential for the virus viability. The protein is Structural polyprotein of Avian infectious bursal disease virus (strain Chicken/Cuba/Soroa/1998) (IBDV).